The sequence spans 334 residues: Ephrin-B1 (334 aa).

An N-terminal signal peptide occupies residues 1–25; the sequence is MARPRGGRWLLGVLLALCRLAAPLA. The region spanning 26–160 is the Ephrin RBD domain; sequence KSLEPVSWSA…TRSMKIVMKV (135 aa). Residues 26–231 lie on the Extracellular side of the membrane; it reads KSLEPVSWSA…FLSSKVAVFA (206 aa). 2 disulfides stabilise this stretch: Cys60-Cys97 and Cys85-Cys149. An N-linked (GlcNAc...) asparagine glycan is attached at Asn135. The tract at residues 175 to 218 is disordered; sequence SRPSKEADNTVKIVTQSPRHKVPTVEEPGKPGSVNQNGQETQGP. Polar residues predominate over residues 207 to 218; it reads SVNQNGQETQGP. A helical membrane pass occupies residues 232–252; it reads AIGAGCVIFILIIIFLVVLLI. Residues 253 to 334 are Cytoplasmic-facing; sequence KIRKRHRKHT…QSPANIYYKV (82 aa). A PDZ-binding motif is present at residues 332–334; sequence YKV.

Belongs to the ephrin family. In terms of assembly, binds to the receptor tyrosine kinase EPHB2. Interacts with GRIP1 and GRIP2. Post-translationally, inducible phosphorylation of tyrosine residues in the cytoplasmic domain.

Its subcellular location is the membrane. Cell surface transmembrane ligand for Eph receptors, a family of receptor tyrosine kinases which are crucial for migration, repulsion and adhesion during neuronal, vascular and epithelial development. Binds promiscuously Eph receptors residing on adjacent cells, leading to contact-dependent bidirectional signaling into neighboring cells. The signaling pathway downstream of the receptor is referred to as forward signaling while the signaling pathway downstream of the ephrin ligand is referred to as reverse signaling. This is Ephrin-B1 (EFNB1) from Gallus gallus (Chicken).